The primary structure comprises 99 residues: NADH-quinone oxidoreductase subunit K (99 aa).

Transmembrane regions (helical) follow at residues 3–23 (PANY…GVLV), 28–48 (IVVF…LVTF), and 62–82 (FFVM…ILAI).

It belongs to the complex I subunit 4L family. As to quaternary structure, NDH-1 is composed of 14 different subunits. Subunits NuoA, H, J, K, L, M, N constitute the membrane sector of the complex.

The protein localises to the cell membrane. The catalysed reaction is a quinone + NADH + 5 H(+)(in) = a quinol + NAD(+) + 4 H(+)(out). Its function is as follows. NDH-1 shuttles electrons from NADH, via FMN and iron-sulfur (Fe-S) centers, to quinones in the respiratory chain. The immediate electron acceptor for the enzyme in this species is believed to be a menaquinone. Couples the redox reaction to proton translocation (for every two electrons transferred, four hydrogen ions are translocated across the cytoplasmic membrane), and thus conserves the redox energy in a proton gradient. The sequence is that of NADH-quinone oxidoreductase subunit K from Parafrankia sp. (strain EAN1pec).